The sequence spans 504 residues: Transcriptional coactivator YAP1 (504 aa).

Pro residues-rich tracts occupy residues 1-12 (MDPGQQPPPQPA) and 20-36 (PSQPPQGQGPPSGPGQP). The disordered stretch occupies residues 1 to 59 (MDPGQQPPPQPAPQGQGQPPSQPPQGQGPPSGPGQPAPAATQAAPQAPPAGHQIVHVRG). Low complexity predominate over residues 37–51 (APAATQAAPQAPPAG). Ser-61 is subject to Phosphoserine; by LATS1 and LATS2. Thr-63 is subject to Phosphothreonine. Positions 86–100 (MRLRKLPDSFFKPPE) form a coiled coil. Residue Lys-90 is modified to N6-lactoyllysine. The interval 91–114 (LPDSFFKPPEPKSHSRQASTDAGT) is disordered. The residue at position 105 (Ser-105) is a Phosphoserine. A Phosphoserine; by LATS1 and LATS2 modification is found at Ser-109. Residue Thr-110 is modified to Phosphothreonine. Thr-119 bears the Phosphothreonine; by MAPK8 and MAPK9 mark. Ser-127 bears the Phosphoserine; by LATS1 and LATS2 mark. Residues Ser-128 and Ser-131 each carry the phosphoserine modification. Residues 133–158 (QLGAVSPGTLTPTGVVSGPAATPTAQ) are disordered. A Phosphoserine; by MAPK8 and MAPK9 modification is found at Ser-138. Phosphothreonine; by MAPK8 and MAPK9 is present on Thr-154. Phosphoserine; by LATS1 and LATS2 is present on Ser-164. WW domains lie at 171–204 (VPLPAGWEMAKTSSGQRYFLNHIDQTTTWQDPRK) and 230–263 (GPLPDGWEQAMTQDGEIYYINHKNKTTSWLDPRL). Phosphoserine is present on residues Ser-274 and Ser-289. 2 disordered regions span residues 275–309 (QSAPVKQPPPLAPQSPQGGVMGGSNSNQQQQMRLQ) and 355–407 (LEQD…MSSY). The segment at 291-504 (QGGVMGGSNS…LDKESFLTWL (214 aa)) is transactivation domain. Residues 298–359 (SNSNQQQQMR…SQLPTLEQDG (62 aa)) adopt a coiled-coil conformation. A compositionally biased stretch (polar residues) spans 355–391 (LEQDGGTQNPVSSPGMSQELRTMTTNSSDPFLNSGTY). Position 367 is a phosphoserine; by MAPK8 and MAPK9 (Ser-367). Ser-371, Ser-381, Ser-382, and Ser-388 each carry phosphoserine. The residue at position 397 (Ser-397) is a Phosphoserine; by LATS1 and LATS2. Phosphoserine; by CK1 occurs at positions 400 and 403. At Tyr-407 the chain carries Phosphotyrosine; by ABL1. Thr-412 bears the Phosphothreonine; by MAPK8 and MAPK9 mark.

The protein belongs to the YAP1 family. As to quaternary structure, part of a complex when phosphorylated that contains DSG3, PKP1, YAP1 and YWHAG; the complex is required for localization of DSG3 and YAP1 to the cell membrane in keratinocytes. Binds to the SH3 domain of the YES kinase. Binds to WBP1 and WBP2. Binds, in vitro, through the WW1 domain, to neural isoforms of ENAH that contain the PPSY motif. The phosphorylated form interacts with YWHAB. Interacts (via WW domains) with LATS1 (via PPxY motif 2). Interacts with LATS2. Interacts with TEAD1, TEAD2, TEAD3 and TEAD4. Interacts with TP73. Interacts with RUNX1. Interacts with HCK. Interacts (via WW domains) with PTPN14 (via PPxY motif 2); this interaction leads to the cytoplasmic sequestration of YAP1 and inhibits its transcriptional coactivator activity. Interacts (when phosphorylated at Ser-127) with SMAD2, SMAD3 and WWTR1. Interacts with PRRG2 (via cytoplasmic domain). Interacts (via WW domains) with PRRG4 (via cytoplasmic domain). Interacts (phosphorylated) with CLDN18; the interaction sequesters YAP1 away from the nucleus and thereby restricts transcription of YAP1 target genes. Interacts with SMAD1. Interacts with AMOTL2, the interaction is required for ubiquitination of AMOTL2 and localization of YAP1 to tight junctions. Interacts with AMOT isoform 1; the interaction facilitates translocation of YAP1 to the cytoplasm and tight junctions. Interacts (via WW domain 1) with isoform 3 of ERBB4 (via PPxY motif 2). Phosphorylated by LATS1 and LATS2; leading to cytoplasmic translocation and inactivation. Phosphorylated by ABL1; leading to YAP1 stabilization, enhanced interaction with TP73 and recruitment onto proapoptotic genes; in response to DNA damage. Phosphorylation at Ser-400 and Ser-403 by CK1 is triggered by previous phosphorylation at Ser-397 by LATS proteins and leads to YAP1 ubiquitination by SCF(beta-TRCP) E3 ubiquitin ligase and subsequent degradation. Phosphorylated at Thr-119, Ser-138, Thr-154, Ser-367 and Thr-412 by MAPK8/JNK1 and MAPK9/JNK2, which is required for the regulation of apoptosis by YAP1. Phosphorylated in the nucleus by PRP4K; phosphorylation leads to nuclear exclusion. Post-translationally, lactylation by AARS1 promotes nuclear localization and stabilization of YAP1, leading to increased Hippo signaling pathway. Delactylated by SIRT1. In terms of processing, ubiquitinated by SCF(beta-TRCP) E3 ubiquitin ligase. As to expression, increased expression seen in some liver and prostate cancers. Isoforms lacking the transactivation domain found in striatal neurons of patients with Huntington disease (at protein level).

The protein resides in the cytoplasm. It localises to the nucleus. It is found in the cell junction. Its subcellular location is the tight junction. The protein localises to the cell membrane. Transcriptional regulator with dual roles as a coactivator and corepressor. Critical downstream regulatory target in the Hippo signaling pathway, crucial for organ size control and tumor suppression by restricting proliferation and promoting apoptosis. The Hippo signaling pathway core involves a kinase cascade featuring STK3/MST2 and STK4/MST1, along with its regulatory partner SAV1, which phosphorylates and activates LATS1/2 in complex with their regulatory protein, MOB1. This activation leads to the phosphorylation and inactivation of the YAP1 oncoprotein and WWTR1/TAZ. Phosphorylation of YAP1 by LATS1/2 prevents its nuclear translocation, thereby regulating the expression of its target genes. The transcriptional regulation of gene expression requires TEAD transcription factors and modulates cell growth, anchorage-independent growth, and induction of epithelial-mesenchymal transition (EMT). Plays a key role in tissue tension and 3D tissue shape by regulating the cortical actomyosin network, acting via ARHGAP18, a Rho GTPase activating protein that suppresses F-actin polymerization. It also suppresses ciliogenesis by acting as a transcriptional corepressor of TEAD4 target genes AURKA and PLK1. In conjunction with WWTR1, regulates TGFB1-dependent SMAD2 and SMAD3 nuclear accumulation. Synergizes with WBP2 to enhance PGR activity. Functionally, activates the C-terminal fragment (CTF) of ERBB4 (isoform 3). The polypeptide is Transcriptional coactivator YAP1 (Homo sapiens (Human)).